The chain runs to 25 residues: Pancreatic triacylglycerol lipase (25 aa).

Residues Cys4 and Cys10 are joined by a disulfide bond.

The protein belongs to the AB hydrolase superfamily. Lipase family. In terms of assembly, forms a 1:1 stoichiometric complex with (pro)colipase/CLPS.

The protein resides in the secreted. The catalysed reaction is a triacylglycerol + H2O = a diacylglycerol + a fatty acid + H(+). The enzyme catalyses 1,2,3-tributanoylglycerol + H2O = dibutanoylglycerol + butanoate + H(+). It catalyses the reaction 1,2,3-tri-(9Z-octadecenoyl)-glycerol + H2O = di-(9Z)-octadecenoylglycerol + (9Z)-octadecenoate + H(+). It carries out the reaction all-trans-retinyl hexadecanoate + H2O = all-trans-retinol + hexadecanoate + H(+). The catalysed reaction is 1,2-di-(9Z-octadecenoyl)-glycerol + H2O = (9Z-octadecenoyl)-glycerol + (9Z)-octadecenoate + H(+). Inhibited by bile salts, is reactivated by (pro)colipase/CLPS. In terms of biological role, plays an important role in fat metabolism. It preferentially splits the esters of long-chain fatty acids at positions 1 and 3, producing mainly 2-monoacylglycerol and free fatty acids, and shows considerably higher activity against insoluble emulsified substrates than against soluble ones. This Felis catus (Cat) protein is Pancreatic triacylglycerol lipase (PNLIP).